The following is a 548-amino-acid chain: Chaperonin GroEL 2 (548 aa).

ATP contacts are provided by residues Thr-30–Pro-33, Lys-51, Asp-87–Thr-91, Gly-415, and Asp-496. The disordered stretch occupies residues Lys-529–Phe-548. Residues Gly-538–Phe-548 show a composition bias toward gly residues.

Belongs to the chaperonin (HSP60) family. Forms a cylinder of 14 subunits composed of two heptameric rings stacked back-to-back. Interacts with the co-chaperonin GroES.

The protein resides in the cytoplasm. It catalyses the reaction ATP + H2O + a folded polypeptide = ADP + phosphate + an unfolded polypeptide.. Its function is as follows. Together with its co-chaperonin GroES, plays an essential role in assisting protein folding. The GroEL-GroES system forms a nano-cage that allows encapsulation of the non-native substrate proteins and provides a physical environment optimized to promote and accelerate protein folding. This is Chaperonin GroEL 2 from Rhodospirillum rubrum (strain ATCC 11170 / ATH 1.1.1 / DSM 467 / LMG 4362 / NCIMB 8255 / S1).